Here is a 219-residue protein sequence, read N- to C-terminus: Kynurenine formamidase (219 aa).

W28 contacts substrate. Residues H58, H62, and D64 each coordinate Zn(2+). H68 serves as the catalytic Proton donor/acceptor. 2 residues coordinate Zn(2+): H170 and E182.

The protein belongs to the Cyclase 1 superfamily. KynB family. Homodimer. The cofactor is Zn(2+).

The catalysed reaction is N-formyl-L-kynurenine + H2O = L-kynurenine + formate + H(+). It participates in amino-acid degradation; L-tryptophan degradation via kynurenine pathway; L-kynurenine from L-tryptophan: step 2/2. In terms of biological role, catalyzes the hydrolysis of N-formyl-L-kynurenine to L-kynurenine, the second step in the kynurenine pathway of tryptophan degradation. The chain is Kynurenine formamidase from Cupriavidus pinatubonensis (strain JMP 134 / LMG 1197) (Cupriavidus necator (strain JMP 134)).